Here is a 478-residue protein sequence, read N- to C-terminus: MQVLHVCSEMFPLLKTGGLADVLGALPAAQIAEGIDTRVLLPAFPDIRRGIPDAQVVSRRDTFAGRITLLFGHYNGVGIYLIDAPHLYDRPGSPYHDTNLFAYTDNVLRFALLGWVGAEMATGLDPFWRPDIVHAHDWHAGLAPAYLAARGHPAKSVFTVHNLAYQGMYYAHHMNEIDLPWSFYNMHGLEFNGQISFLKAGLYYADHITAVSPTYAREITEPEFGYGMEGLLRQRQREGRLTGILNGVDEKIWNPETDLLLASRFSRDSVEDKAENKRQLQVAMGLKVNDKVPLFAVVSRLTSQKGLDLVLEALPGLLEQGGQLALLGAGDPVLQEGFLAAAAEHPGQVGVQIGYHEAFSHRLMGGSDVILVPSRFEPCGLTQLYGLKYGTLPLVRRTGGLADTVSDTSLENLADGIATGFAFEDSNAWSLLRAIRRAFVLWSRPSLWRFVQRQAMAMDFSWHVAAQSYRDLYQRLKS.

Residue Lys-15 coordinates ADP-alpha-D-glucose.

It belongs to the glycosyltransferase 1 family. Bacterial/plant glycogen synthase subfamily.

The enzyme catalyses [(1-&gt;4)-alpha-D-glucosyl](n) + ADP-alpha-D-glucose = [(1-&gt;4)-alpha-D-glucosyl](n+1) + ADP + H(+). It functions in the pathway glycan biosynthesis; glycogen biosynthesis. Synthesizes alpha-1,4-glucan chains using ADP-glucose. This is Glycogen synthase from Enterobacter sp. (strain 638).